The sequence spans 83 residues: Exodeoxyribonuclease 7 small subunit (83 aa).

Belongs to the XseB family. Heterooligomer composed of large and small subunits.

Its subcellular location is the cytoplasm. It catalyses the reaction Exonucleolytic cleavage in either 5'- to 3'- or 3'- to 5'-direction to yield nucleoside 5'-phosphates.. In terms of biological role, bidirectionally degrades single-stranded DNA into large acid-insoluble oligonucleotides, which are then degraded further into small acid-soluble oligonucleotides. The sequence is that of Exodeoxyribonuclease 7 small subunit from Novosphingobium aromaticivorans (strain ATCC 700278 / DSM 12444 / CCUG 56034 / CIP 105152 / NBRC 16084 / F199).